The following is a 394-amino-acid chain: Phosphopentomutase (394 aa).

Residues Asp-15, Asp-288, His-293, Asp-329, His-330, and His-341 each coordinate Mn(2+).

This sequence belongs to the phosphopentomutase family. Requires Mn(2+) as cofactor.

It localises to the cytoplasm. The enzyme catalyses 2-deoxy-alpha-D-ribose 1-phosphate = 2-deoxy-D-ribose 5-phosphate. The catalysed reaction is alpha-D-ribose 1-phosphate = D-ribose 5-phosphate. Its pathway is carbohydrate degradation; 2-deoxy-D-ribose 1-phosphate degradation; D-glyceraldehyde 3-phosphate and acetaldehyde from 2-deoxy-alpha-D-ribose 1-phosphate: step 1/2. Isomerase that catalyzes the conversion of deoxy-ribose 1-phosphate (dRib-1-P) and ribose 1-phosphate (Rib-1-P) to deoxy-ribose 5-phosphate (dRib-5-P) and ribose 5-phosphate (Rib-5-P), respectively. This Bacillus pumilus (strain SAFR-032) protein is Phosphopentomutase.